The chain runs to 765 residues: Polyribonucleotide nucleotidyltransferase (765 aa).

Mg(2+) contacts are provided by D556 and D562. Residues 622 to 681 (PRITKISIPQNKIGEVIGPKGKTINQITEETGANISIEDDGTVFVSAVGGEAAEAAIEKI) form the KH domain. Residues 693 to 762 (GDRFLGTVVK…NRGKISLVPV (70 aa)) form the S1 motif domain.

The protein belongs to the polyribonucleotide nucleotidyltransferase family. Mg(2+) serves as cofactor.

The protein localises to the cytoplasm. The enzyme catalyses RNA(n+1) + phosphate = RNA(n) + a ribonucleoside 5'-diphosphate. Its function is as follows. Involved in mRNA degradation. Catalyzes the phosphorolysis of single-stranded polyribonucleotides processively in the 3'- to 5'-direction. This is Polyribonucleotide nucleotidyltransferase from Corynebacterium urealyticum (strain ATCC 43042 / DSM 7109).